Consider the following 364-residue polypeptide: Peroxisomal membrane protein PEX16 (364 aa).

A Phosphoserine modification is found at S200.

It belongs to the peroxin-16 family.

The protein resides in the peroxisome membrane. Its function is as follows. Involved in the biogenesis of peroxisomes. The sequence is that of Peroxisomal membrane protein PEX16 (pex16) from Schizosaccharomyces pombe (strain 972 / ATCC 24843) (Fission yeast).